Here is a 443-residue protein sequence, read N- to C-terminus: Xaa-Pro dipeptidase (443 aa).

Mn(2+)-binding residues include Asp246, Asp257, His339, Glu384, and Glu423.

This sequence belongs to the peptidase M24B family. Bacterial-type prolidase subfamily. It depends on Mn(2+) as a cofactor.

It catalyses the reaction Xaa-L-Pro dipeptide + H2O = an L-alpha-amino acid + L-proline. Functionally, splits dipeptides with a prolyl residue in the C-terminal position. This chain is Xaa-Pro dipeptidase, found in Shigella dysenteriae serotype 1 (strain Sd197).